Reading from the N-terminus, the 3375-residue chain is Basement membrane proteoglycan (3375 aa).

A signal peptide spans 1–22 (MKRSSTVLAALLALLLVATNDA). An Ig-like C2-type 1 domain is found at 45-130 (VQITVFPSEK…NTVEARATLS (86 aa)). Intrachain disulfides connect Cys-66–Cys-114, Cys-149–Cys-161, Cys-156–Cys-174, Cys-168–Cys-183, Cys-190–Cys-202, Cys-197–Cys-215, Cys-209–Cys-224, Cys-233–Cys-246, Cys-240–Cys-259, Cys-253–Cys-268, and Cys-293–Cys-344. 3 LDL-receptor class A domains span residues 148 to 184 (QCMA…ANCP), 189 to 225 (TCEP…LNCN), and 232 to 269 (DCKP…VGCV). The Ig-like C2-type 2 domain occupies 271 to 355 (PTVVDPPQTN…AINVKGRVLA (85 aa)). Residues 364–385 (VDDPRPQPPQPPTAPPQRASCD) form a disordered region. A compositionally biased stretch (pro residues) spans 369-378 (PQPPQPPTAP). Disulfide bonds link Cys-384/Cys-400, Cys-402/Cys-411, and Cys-414/Cys-429. Positions 384 to 431 (CDTRGAVTPYPNNYGTCECKSQVTGPNCDQCKPGAFHLSEKSPEGCLK) constitute a Laminin EGF-like 1; truncated domain. The 10-residue stretch at 432–441 (CFCFGVSNDC) folds into the Laminin EGF-like 2; first part domain. Residues 450–633 (KDRLMFAGDA…PDGLALEVEQ (184 aa)) enclose the Laminin IV type A 1 domain. Intrachain disulfides connect Cys-634–Cys-648, Cys-636–Cys-689, Cys-691–Cys-700, and Cys-703–Cys-718. The region spanning 634–666 (CVCPPGYLGTSCEDCAPGYERSGYGPYLGTCVP) is the Laminin EGF-like 2; second part domain. The 47-residue stretch at 674–720 (CGPGAVAPTAPAQGQCQCKASVIGPNCDRCAPNSFGLAPTNPQGCIP) folds into the Laminin EGF-like 3; truncated domain. One can recognise a Laminin EGF-like 4; first part domain in the interval 721–730 (CFCSGVTQQC). The 182-residue stretch at 740–921 (VSIDYARGDR…QGLTAAEVEQ (182 aa)) folds into the Laminin IV type A 2 domain. Residues 922 to 954 (CICPPGYVGTSCEDCAPGYSRTGGGLYLGLCEK) enclose the Laminin EGF-like 4; second part domain. 15 cysteine pairs are disulfide-bonded: Cys-955-Cys-964, Cys-957-Cys-971, Cys-974-Cys-983, Cys-986-Cys-1002, Cys-1011-Cys-1021, Cys-1013-Cys-1027, Cys-1030-Cys-1039, Cys-1042-Cys-1058, Cys-1061-Cys-1069, Cys-1063-Cys-1079, Cys-1082-Cys-1091, Cys-1094-Cys-1109, Cys-1152-Cys-1200, Cys-1247-Cys-1294, and Cys-1338-Cys-1384. 3 consecutive Laminin EGF-like domains span residues 955 to 1004 (CECN…DCQP), 1011 to 1060 (CHCN…DCTP), and 1061 to 1111 (CPCP…VCEP). 15 consecutive Ig-like C2-type domains span residues 1126 to 1222 (PHEV…KRIS), 1226 to 1311 (PQPV…AVLE), 1319 to 1401 (PKVD…EPVQ), 1410 to 1499 (PQRG…ARLN), 1503 to 1585 (PQAI…RPVE), 1588 to 1680 (PARV…TPAT), 1690 to 1785 (PQVE…STLN), 1793 to 1878 (PRPV…VRLE), 1886 to 1970 (PTAV…GNVN), 1973 to 2069 (PSLT…IYIE), 2073 to 2163 (PSRI…AVHV), 2173 to 2260 (PKVE…TAVS), 2263 to 2343 (QQDK…GFVT), 2349 to 2435 (PDTI…RTVL), and 2446 to 2530 (TFTV…VDLQ). Positions 1388 to 1400 (DPSDNTPLQSEPV) are enriched in polar residues. 2 disordered regions span residues 1388 to 1426 (DPSD…QTVN) and 1478 to 1497 (EYEC…PPAR). Residue Asn-1422 is glycosylated (N-linked (GlcNAc...) asparagine). 4 disulfide bridges follow: Cys-1435/Cys-1481, Cys-1527/Cys-1573, Cys-1618/Cys-1663, and Cys-1719/Cys-1767. Over residues 1481–1497 (CTSTEPDGSTQLSPPAR) the composition is skewed to polar residues. The segment at 1773–1792 (NSPPVKTNPSTLNVTPEGTP) is disordered. Residues 1776–1788 (PVKTNPSTLNVTP) show a composition bias toward polar residues. 15 disulfides stabilise this stretch: Cys-1814–Cys-1861, Cys-1907–Cys-1954, Cys-1998–Cys-2053, Cys-2099–Cys-2147, Cys-2195–Cys-2242, Cys-2284–Cys-2329, Cys-2374–Cys-2420, Cys-2467–Cys-2514, Cys-2713–Cys-2725, Cys-2719–Cys-2736, Cys-2738–Cys-2747, Cys-2754–Cys-2764, Cys-2759–Cys-2773, Cys-2775–Cys-2784, and Cys-2935–Cys-2960. Residues 1880 to 1918 (TEDQEPPTAVVEPRTWNGKPGERHQFRCITTGSPTPKIT) are disordered. Residues 1907–1918 (CITTGSPTPKIT) show a composition bias toward polar residues. An N-linked (GlcNAc...) asparagine glycan is attached at Asn-2476. The region spanning 2532–2713 (DDFIPVIDGE…PSSVVKYDAC (182 aa)) is the Laminin G-like 1 domain. Residues 2793-2960 (PLGFTSDTSF…LSSSGDISSC (168 aa)) enclose the Laminin G-like 2 domain. Asn-2950 carries N-linked (GlcNAc...) asparagine glycosylation. Positions 2952-2963 (SSSGDISSCEES) are enriched in low complexity. Residues 2952–3124 (SSSGDISSCE…GTLPPDSSSE (173 aa)) form a disordered region. Acidic residues-rich tracts occupy residues 2979–2990 (EEPEAVIEEPTT) and 2999–3010 (PITEEPTEEPTT). Residues 3011–3033 (TEEPTTTEEPTTTTEEPTTTTTE) are compositionally biased toward low complexity. Over residues 3034–3044 (EPYHIYETSRD) the composition is skewed to basic and acidic residues. A compositionally biased stretch (low complexity) spans 3049–3079 (IIIPVETTTTSTTTTSTTEEPEAEPALVLPT). The span at 3081 to 3094 (PVEENDVSDEEEEI) shows a compositional bias: acidic residues. Intrachain disulfides connect Cys-3141–Cys-3152, Cys-3146–Cys-3162, Cys-3164–Cys-3173, and Cys-3333–Cys-3359. Asn-3143 and Asn-3156 each carry an N-linked (GlcNAc...) asparagine glycan. Residues 3180-3359 (EHAARFDGDA…AIDGKNVKPC (180 aa)) form the Laminin G-like 3 domain.

As to quaternary structure, component of an integrin containing attachment complex, composed of at least pat-2, pat-3, pat-4, pat-6, unc-52, unc-97 and unc-112. Detected on embryonic and adult body wall muscle cells (at protein level). Found in the basement membrane of all contractile tissues (at protein level). Expressed in gonadal sheath cells and spermatheca.

It localises to the secreted. The protein localises to the extracellular space. Its subcellular location is the extracellular matrix. The protein resides in the basement membrane. It is found in the cytoplasm. It localises to the myofibril. The protein localises to the sarcomere. Its subcellular location is the m line. Component of an integrin containing attachment complex, which is required for muscle development and maintenance. Probable structural role in myofilament assembly and/or attachment of the myofilament lattice to the cell membrane. May be an extracellular anchor for integrin receptors in body wall muscles and myoepithelial sheath cells. During the formation of neuromuscular junctions at the larval stage, negatively regulates membrane protrusion from body wall muscles, probably downstream of the integrin complex formed by pat-2 and pat-3. Involved in ovulation. Required for normal lifespan. The chain is Basement membrane proteoglycan from Caenorhabditis elegans.